Consider the following 92-residue polypeptide: Progonadoliberin-1 (92 aa).

An N-terminal signal peptide occupies residues 1–23; it reads MKPIQKLLAGLILLTWCVEGCSS. Glutamine 24 bears the Pyrrolidone carboxylic acid mark. At glycine 33 the chain carries Glycine amide.

This sequence belongs to the GnRH family. The precursor is cleaved by ACE, which removes the Gly-Lys-Arg peptide at the C-terminus, leading to mature hormone. The mature form of Gonadoliberin-1 is also cleaved and degraded by ACE.

The protein resides in the secreted. Stimulates the secretion of gonadotropins; it stimulates the secretion of both luteinizing and follicle-stimulating hormones. The protein is Progonadoliberin-1 (GNRH1) of Homo sapiens (Human).